A 450-amino-acid chain; its full sequence is Nuclear hormone receptor family member nhr-40 (450 aa).

Residues 28–103 (GTLCVVCSDF…MGMDPKAIQH (76 aa)) constitute a DNA-binding region (nuclear receptor). 2 consecutive NR C4-type zinc fingers follow at residues 31 to 51 (CVVCSDFASGIHYSVASCNGC) and 67 to 91 (CQFSGDCVVGKSVRCVCRSCRLKKC). In terms of domain architecture, NR LBD spans 173–450 (DVKAVIEDLL…LIDQLIIVGL (278 aa)).

This sequence belongs to the nuclear hormone receptor family. Isoform b: Expressed in body wall muscle cells, pharyngeal muscles, rectal gland cells, vulval and uterine muscles and neurons in the head and ventral nerve cord. Isoform c: Expressed in body wall muscle cells, neurons in the head, nerve ring, ventral and dorsal nerve cords and epidermal cells in the tail.

The protein localises to the nucleus. In terms of biological role, orphan nuclear receptor. Plays a role in morphogenesis and elongation during embryonic and larval development. Plays a role in muscle formation and motility. The sequence is that of Nuclear hormone receptor family member nhr-40 from Caenorhabditis elegans.